The primary structure comprises 337 residues: MSEIEEEEEEGSASAITGSRSFDLPDELLQVLPSDPFEQLDVARKITSIALSTRVSALESESSDLRELLAEKEKEFEELQSHVESLEASLSDAFHKLSLADGEKENLIRENASLSNTVKRLQRDVSKLEGFRKTLMMSLQDDDQNAGTTQIIAKPTPNDDDTPFQPSRHSSIQSQQASEAIEPAATDNENDAPKPSLSASLPLVSQTTTPRLTPPGSPPILSASGTPKTTSRPISPRRHSVSFATTRGMFDDTRSSISISEPGSQTARTRVDGKEFFRQVRSRLSYEQFGAFLGNVKDLNAHKQTREETLRKAEEIFGGDNRDLYVIFEGLITRNAH.

A compositionally biased stretch (acidic residues) spans 1–11; sequence MSEIEEEEEEG. Residues 1-20 are disordered; sequence MSEIEEEEEEGSASAITGSR. Ser-2 carries the N-acetylserine modification. A coiled-coil region spans residues 50 to 130; the sequence is ALSTRVSALE…LQRDVSKLEG (81 aa). Positions 139 to 242 are disordered; sequence LQDDDQNAGT…PISPRRHSVS (104 aa). Over residues 170 to 182 the composition is skewed to low complexity; sequence SSIQSQQASEAIE. A compositionally biased stretch (polar residues) spans 197-211; that stretch reads LSASLPLVSQTTTPR. Position 213 is a phosphothreonine (Thr-213). Residue Ser-217 is modified to Phosphoserine. Polar residues predominate over residues 223 to 233; that stretch reads ASGTPKTTSRP. Thr-226 is subject to Phosphothreonine. A Phosphoserine modification is found at Ser-235.

This is an uncharacterized protein from Arabidopsis thaliana (Mouse-ear cress).